Consider the following 595-residue polypeptide: Aspartate--tRNA(Asp/Asn) ligase (595 aa).

E175 provides a ligand contact to L-aspartate. Positions 199 to 202 (QQYK) are aspartate. L-aspartate is bound by residues R221 and H454. 221–223 (RDE) contacts ATP. E488 contributes to the ATP binding site. An L-aspartate-binding site is contributed by R495. 540-543 (GIDR) contributes to the ATP binding site.

This sequence belongs to the class-II aminoacyl-tRNA synthetase family. Type 1 subfamily. Homodimer.

The protein resides in the cytoplasm. It carries out the reaction tRNA(Asx) + L-aspartate + ATP = L-aspartyl-tRNA(Asx) + AMP + diphosphate. Its function is as follows. Aspartyl-tRNA synthetase with relaxed tRNA specificity since it is able to aspartylate not only its cognate tRNA(Asp) but also tRNA(Asn). Reaction proceeds in two steps: L-aspartate is first activated by ATP to form Asp-AMP and then transferred to the acceptor end of tRNA(Asp/Asn). This chain is Aspartate--tRNA(Asp/Asn) ligase, found in Sinorhizobium medicae (strain WSM419) (Ensifer medicae).